A 294-amino-acid polypeptide reads, in one-letter code: Mating type protein mtA-1 (294 aa).

Positions 46–101 form a DNA-binding region, alpha box; sequence TAKKKVNGFMGFRSNYSPLFSYLPQKMRSPFMTILWQYDPYHNEWDFMCSVYSSIR.

This sequence belongs to the MATALPHA1 family.

The protein resides in the nucleus. In terms of biological role, mating type proteins are sequence specific DNA-binding proteins that act as master switches in fungal differentiation by controlling gene expression in a cell type-specific fashion. Transcriptional activator that induces the transcription of alpha-specific genes. The polypeptide is Mating type protein mtA-1 (MTA1) (Sordaria equina).